Consider the following 246-residue polypeptide: MTTGDCCHLPGSLCDCTDSATFLKSLEESDLGRPQYVTQVTAKDGQLLSTVIKALGTQSDGPICRICHEGGNGERLLSPCDCTGTLGTVHKTCLEKWLSSSNTSYCELCHTEFAVERRPRPVTEWLKDPGPRHEKRTLFCDMVCFLFITPLAAISGWLCLRGAQDHLQFNSRLEAVGLIALTIALFTIYVLWTLVSFRYHCQLYSEWRRTNQKVLLLIPDSKTATTIHHSFLSSKLLKFASDETTV.

The segment at 56–116 (GTQSDGPICR…ELCHTEFAVE (61 aa)) adopts an RING-CH-type zinc-finger fold. Zn(2+) contacts are provided by cysteine 64, cysteine 67, cysteine 80, cysteine 82, histidine 90, cysteine 93, cysteine 106, and cysteine 109. The next 2 helical transmembrane spans lie at 138–158 (LFCD…SGWL) and 175–195 (AVGL…WTLV).

Its subcellular location is the endoplasmic reticulum membrane. The protein resides in the lysosome membrane. It is found in the endosome membrane. It catalyses the reaction S-ubiquitinyl-[E2 ubiquitin-conjugating enzyme]-L-cysteine + [acceptor protein]-L-lysine = [E2 ubiquitin-conjugating enzyme]-L-cysteine + N(6)-ubiquitinyl-[acceptor protein]-L-lysine.. Its pathway is protein modification; protein ubiquitination. E3 ubiquitin-protein ligase which may be involved in endosomal trafficking. E3 ubiquitin ligases accept ubiquitin from an E2 ubiquitin-conjugating enzyme in the form of a thioester and then directly transfer the ubiquitin to targeted substrates. In Xenopus laevis (African clawed frog), this protein is E3 ubiquitin-protein ligase MARCHF2 (marchf2).